We begin with the raw amino-acid sequence, 333 residues long: Ribosomal RNA small subunit methyltransferase C (333 aa).

The protein belongs to the methyltransferase superfamily. RsmC family. As to quaternary structure, monomer.

It is found in the cytoplasm. The catalysed reaction is guanosine(1207) in 16S rRNA + S-adenosyl-L-methionine = N(2)-methylguanosine(1207) in 16S rRNA + S-adenosyl-L-homocysteine + H(+). Specifically methylates the guanine in position 1207 of 16S rRNA in the 30S particle. The chain is Ribosomal RNA small subunit methyltransferase C from Chromohalobacter salexigens (strain ATCC BAA-138 / DSM 3043 / CIP 106854 / NCIMB 13768 / 1H11).